A 1180-amino-acid chain; its full sequence is Neurexin like receptor 1 (1180 aa).

The first 20 residues, 1-20 (MSGLCLVLLLSIFAVSQSSG), serve as a signal peptide directing secretion. Residues 21-1108 (ECSDVSFSSV…SQNKQDLVSK (1088 aa)) lie on the Extracellular side of the membrane. The Laminin G-like 1 domain occupies 124-290 (PITAFDDSSY…LSPNEVHNQC (167 aa)). N-linked (GlcNAc...) asparagine glycosylation occurs at N229. An intrachain disulfide couples C267 to C290. N302, N336, N355, and N436 each carry an N-linked (GlcNAc...) asparagine glycan. Residues 444–481 (FQEKCLPNPCENGGGCVQSALDDYVCNCKEGYKGKNCH) enclose the EGF-like 1 domain. Disulfide bonds link C448-C459, C453-C469, and C471-C480. Residues N522 and N636 are each glycosylated (N-linked (GlcNAc...) asparagine). The Laminin G-like 2 domain maps to 695–863 (TFDPVTFSNR…GVAIGDDGYC (169 aa)). An EGF-like 2 domain is found at 859 to 896 (DDGYCRPDLCQNGGQCVDKYDGYVCDCSMTPFGGSDCT). 3 disulfide bridges follow: C863-C874, C868-C883, and C885-C895. N-linked (GlcNAc...) asparagine glycosylation is found at N933, N949, N978, N997, N1011, and N1052. The chain crosses the membrane as a helical span at residues 1109–1129 (AIIGGGILALSLFILCMSSLI). The Cytoplasmic segment spans residues 1130–1180 (CYMRSRPEGVYKTNETGENCSPSRSEEPLVHNTTSNNNNNPTYASNKEYFC). The span at 1142–1152 (TNETGENCSPS) shows a compositional bias: polar residues. Positions 1142-1180 (TNETGENCSPSRSEEPLVHNTTSNNNNNPTYASNKEYFC) are disordered. The segment covering 1161 to 1171 (NTTSNNNNNPT) has biased composition (low complexity).

It belongs to the neurexin family. Interacts (via the intracellular domain) with F-actin; the interaction is required for anchoring F-actin at the membrane for gap junction formation. Highly expressed in pharyngeal g1 and g2 gland cells, pharyngeal muscle cells and the unilateral GABAergic RIS interneuron (at protein level). Expressed in pm5 pharyngeal muscle cells and the nerve ring.

Its subcellular location is the cell membrane. It localises to the cell junction. The protein resides in the gap junction. In terms of biological role, required for gap junction formation, playing a role in anchoring the cytoskeletal component F-actin to the membrane of adjacent cells and thus facilitating the formation of gap junction channels in embryonic cells, muscle cells and neuronal cells. Plays a role in maintaining gap junction activity to promote pharyngeal muscle contraction. The chain is Neurexin like receptor 1 from Caenorhabditis elegans.